The sequence spans 266 residues: Basic endochitinase C (266 aa).

An N-terminal signal peptide occupies residues 1-23 (MRSLAVVVAVVATVAMAIGTAHG). 3 cysteine pairs are disulfide-bonded: C46/C108, C120/C128, and C246/C259. Catalysis depends on E90, which acts as the Proton donor.

The protein belongs to the glycosyl hydrolase 19 family. Chitinase class II subfamily. As to expression, localized to the starchy endoderm of the seed May localize to other parts of the seed including the aleurone cells (at protein level).

It carries out the reaction Random endo-hydrolysis of N-acetyl-beta-D-glucosaminide (1-&gt;4)-beta-linkages in chitin and chitodextrins.. Functionally, defense against chitin-containing fungal pathogens. Binds the hyphal tips of fungi and degrades nascent chitin. The polypeptide is Basic endochitinase C (Secale cereale (Rye)).